Here is a 676-residue protein sequence, read N- to C-terminus: Probable ERAD-associated E3 ubiquitin-protein ligase ASI1 (676 aa).

Residues 1–78 (MSTNILQHVK…TLQLAKVGIR (78 aa)) lie on the Perinuclear space side of the membrane. Asn-24, Asn-34, Asn-46, and Asn-66 each carry an N-linked (GlcNAc...) asparagine glycan. The chain crosses the membrane as a helical span at residues 79–99 (MFFSYSVSKYAVLCFSTAIIL). The Nuclear segment spans residues 100 to 126 (NRLTVMSSLRSNSTNIRLPLWSKTLLH). A helical transmembrane segment spans residues 127 to 147 (LVATLSLVKALLQILSQFGLM). Residues 148 to 156 (HELHVSDTD) lie on the Perinuclear space side of the membrane. A helical transmembrane segment spans residues 157-177 (FYALSVYLFVALSDCIEIFIS). Residues 178 to 181 (STTN) are Nuclear-facing. The chain crosses the membrane as a helical span at residues 182–202 (VPSLICSDFSIWGLSLNLYII). Residues 203–277 (SKMPAGQQHI…NICLIHNYFP (75 aa)) are Perinuclear space-facing. A helical transmembrane segment spans residues 278 to 298 (GFFYISTILLASIGIFLKALF). At 299 to 676 (TSNPFRSLYS…VKGYSKLNIV (378 aa)) the chain is on the nuclear side. The RING-type; atypical zinc-finger motif lies at 624 to 664 (CLICKVNKRNIVTWPCRCLALCDDCRISLGYKGFATCVSCD).

In terms of assembly, component of the Asi complex, which contains ASI1, ASI2 and ASI3. Interacts directly with ASI1.

It localises to the nucleus inner membrane. It catalyses the reaction S-ubiquitinyl-[E2 ubiquitin-conjugating enzyme]-L-cysteine + [acceptor protein]-L-lysine = [E2 ubiquitin-conjugating enzyme]-L-cysteine + N(6)-ubiquitinyl-[acceptor protein]-L-lysine.. In terms of biological role, part of the nuclear inner membrane (INM)-specific branch of the ER-associated degradation (ERAD) pathway, required for the elimination of misfolded proteins in the INM, a specialized ER subdomain. Required for ERG11 degradation. Negative regulator of SPS-sensor signaling. Together with ASI2 and ASI3, prevents the unprocessed precursor forms of STP1 and STP2 that escape cytoplasmic anchoring from inducing SPS-sensor-regulated genes in the absence of inducing signals. Controls amino acid permease (AAP) gene expression in response to amino acid availability, a process mediated by the transcription factors STP1 and STP1. The sequence is that of Probable ERAD-associated E3 ubiquitin-protein ligase ASI1 (ASI3) from Saccharomyces cerevisiae (strain ATCC 204508 / S288c) (Baker's yeast).